Consider the following 73-residue polypeptide: Translation initiation factor IF-1 (73 aa).

Residues 1–72 (MAKEDVIEVE…TKGRITYRFI (72 aa)) enclose the S1-like domain.

Belongs to the IF-1 family. As to quaternary structure, component of the 30S ribosomal translation pre-initiation complex which assembles on the 30S ribosome in the order IF-2 and IF-3, IF-1 and N-formylmethionyl-tRNA(fMet); mRNA recruitment can occur at any time during PIC assembly.

Its subcellular location is the cytoplasm. One of the essential components for the initiation of protein synthesis. Stabilizes the binding of IF-2 and IF-3 on the 30S subunit to which N-formylmethionyl-tRNA(fMet) subsequently binds. Helps modulate mRNA selection, yielding the 30S pre-initiation complex (PIC). Upon addition of the 50S ribosomal subunit IF-1, IF-2 and IF-3 are released leaving the mature 70S translation initiation complex. This chain is Translation initiation factor IF-1, found in Lactobacillus johnsonii (strain CNCM I-12250 / La1 / NCC 533).